The primary structure comprises 235 residues: MARPLVPSSQKALLLELKGLQEEPVEGFRVTLVDEGDLYNWEVAIFGPPNTYYEGGYFKARLKFPIDYPYSPPAFRFLTKMWHPNIYETGDVCISILHPPVDDPQSGELPSERWNPTQNVRTILLSVISLLNEPNTFSPANVDASVMYRKWKESKGKDREYTDIIRKQVLGTKVDAERDGVKVPTTLAEYCVKTKAPAPDEGSDLFYDDYYEDGEVEEADSCFGDEEDDSGTEES.

The UBC core domain occupies 8–174; sequence SSQKALLLEL…IRKQVLGTKV (167 aa). Catalysis depends on cysteine 93, which acts as the Glycyl thioester intermediate. The segment at 98–113 is important for ubiquitin transfer; the sequence is HPPVDDPQSGELPSER. The SCF-binding stretch occupies residues 190-235; sequence YCVKTKAPAPDEGSDLFYDDYYEDGEVEEADSCFGDEEDDSGTEES. Residues serine 203, serine 221, and serine 230 each carry the phosphoserine; by CK2 modification. Threonine 232 is modified (phosphothreonine; by CK2). Serine 235 carries the post-translational modification Phosphoserine; by CK2.

This sequence belongs to the ubiquitin-conjugating enzyme family. As to quaternary structure, interacts with multiple Cul1-RING E3 ubiquitin-protein ligase complexes, also known as SCF (SKP1-CUL1-F-box protein) complexes. Identified in a SCF (SKP1-CUL1-F-box protein) E3 ubiquitin ligase complex together with HINT1 and RBX1. When cullin is neddylated, the interaction between the E2 and the SCF complex is strengthened. Interacts with multiple Cul2-RING (CRL2) E3 ubiquitin-protein ligase complexes, also known as ECS (Elongin BC-CUL2/5-SOCS-box protein) complexes. When phosphorylated, interacts with beta-TrCP (BTRC). Interacts with casein kinase subunit CSNK2B. Interacts with CNTD1; this interaction regulates the cell-cycle progression. Phosphorylated by CK2. Phosphorylation of the C-terminal tail by CK2 controls the nuclear localization.

The protein localises to the cytoplasm. It is found in the nucleus. The catalysed reaction is S-ubiquitinyl-[E1 ubiquitin-activating enzyme]-L-cysteine + [E2 ubiquitin-conjugating enzyme]-L-cysteine = [E1 ubiquitin-activating enzyme]-L-cysteine + S-ubiquitinyl-[E2 ubiquitin-conjugating enzyme]-L-cysteine.. The enzyme catalyses S-ubiquitinyl-[E1 ubiquitin-activating enzyme]-L-cysteine + [acceptor protein]-L-lysine = [E1 ubiquitin-activating enzyme]-L-cysteine + N(6)-monoubiquitinyl-[acceptor protein]-L-lysine.. It participates in protein modification; protein ubiquitination. Its activity is regulated as follows. CDC34-catalyzed polyubiquitin chain assembly activity is stimulated by the conjugation of NEDD8 to the CUL1 SCF E3 ligase complex subunit. Its function is as follows. E2 ubiquitin-conjugating enzyme that accepts ubiquitin from an E1 ubiquitin-activating protein, and catalyzes its covalent attachment to other proteins by an E3 ubiquitin-protein ligase complex. In vitro catalyzes 'Lys-48'-linked polyubiquitination. Cooperates with the E2 UBCH5C and the SCF(FBXW11) E3 ligase complex for the polyubiquitination of NFKBIA leading to its subsequent proteasomal degradation. Performs ubiquitin chain elongation building ubiquitin chains from the UBE2D3-primed NFKBIA-linked ubiquitin. UBE2D3 acts as an initiator E2, priming the phosphorylated NFKBIA target at positions 'Lys-21' and/or 'Lys-22' with a monoubiquitin. Cooperates with the SCF(SKP2) E3 ligase complex to regulate cell proliferation through ubiquitination and degradation of MYBL2 and KIP1. Involved in ubiquitin conjugation and degradation of CREM isoform ICERIIgamma and ATF15 resulting in abrogation of ICERIIgamma- and ATF5-mediated repression of cAMP-induced transcription during both meiotic and mitotic cell cycles. Involved in the regulation of the cell cycle G2/M phase through its targeting of the WEE1 kinase for ubiquitination and degradation. Also involved in the degradation of beta-catenin. In Mus musculus (Mouse), this protein is Ubiquitin-conjugating enzyme E2 R1 (Cdc34).